Consider the following 359-residue polypeptide: G-protein coupled receptor 15 (359 aa).

The Extracellular segment spans residues 1–33 (MDPEETSVYLDYYYATSPNPDIRETHSHVPYTS). Residues 34–54 (VFLPVFYTAVFLTGVLGNLVL) form a helical membrane-spanning segment. At 55 to 69 (MGALHFKPGSRRLID) the chain is on the cytoplasmic side. Residues 70–90 (IFIINLAASDFIFLVTLPLWV) traverse the membrane as a helical segment. Residues 91-120 (DKEASLGLWRTGSFLCKGSSYMISVNMHCS) lie on the Extracellular side of the membrane. Residues 121–141 (VFLLTCMSVDRYLAIVCPVVS) traverse the membrane as a helical segment. The Cytoplasmic segment spans residues 142-149 (RKFRRTDC). The chain crosses the membrane as a helical span at residues 150–170 (AYVVCASIWFISCLLGLPTLL). Topologically, residues 171–192 (SRELTLIDDKPYCAEKKATPLK) are extracellular. Residues 193-213 (LIWSLVALIFTFFVPLLNIVT) traverse the membrane as a helical segment. Residues 214 to 239 (CYCCIARKLCAHYQQSGRHNKKLKKS) are Cytoplasmic-facing. Residues 240-260 (IKIILIVVAAFLVSWLPFNTF) traverse the membrane as a helical segment. The Extracellular portion of the chain corresponds to 261–283 (KLLAIVSGLQERYFPSAMLQLGM). A helical membrane pass occupies residues 284 to 304 (EVSGPLAFANSCVNPFIYYIF). Residues 305–359 (DSYIRRAIVHCLCPCLKNYDFGSSTETSDSHLTKALSTFIHAEDFTRRRKRSVSL) lie on the Cytoplasmic side of the membrane. Phosphoserine is present on serine 358.

It belongs to the G-protein coupled receptor 1 family. In terms of assembly, interacts with adapter YWHAE; this interaction promotes ER-to-Golgi transport of GPR15. In terms of processing, phosphorylation is necessary for YWHAE binding and efficient surface expression. O-glycosylated. Sialylated O-glycans in the N-terminal tail inhibits binding of GPR15LG. Post-translationally, sulfation is required for efficient binding of GPR15LG.

It localises to the cell membrane. Its function is as follows. G protein-coupled receptor that plays an important role in immune homeostasis. Acts via its natural ligand GPR15LG, a chemokine-like polypeptide strongly expressed in gastrointestinal tissues. GPR15-GPR15LG signaling axis regulates intestinal homeostasis and inflammation through the migration of immune cells. Controls thereby the specific homing of T-cells, particularly FOXP3+ regulatory T-cells (Tregs), to the large intestine lamina propria. Also required for skin localization of thymus-derived dendritic epidermal T-cells. Plays an important role in mediating cytoprotective function as well as angiogenesis of thrombomodulin. Mechanistically, preferentially signals through the Gi/o pathway to inhibit adenylate cyclase activity and activate a phosphatidylinositol-calcium second messenger system that regulates the release of Ca(2+) ions from intracellular stores. This is G-protein coupled receptor 15 (GPR15) from Macaca fascicularis (Crab-eating macaque).